A 217-amino-acid polypeptide reads, in one-letter code: Outer-membrane lipoprotein LolB (217 aa).

The N-terminal stretch at 1–20 is a signal peptide; it reads MSRAVRTLALGGLVLVGLSA. A lipid anchor (N-palmitoyl cysteine) is attached at cysteine 21. A lipid anchor (S-diacylglycerol cysteine) is attached at cysteine 21.

It belongs to the LolB family. As to quaternary structure, monomer.

It is found in the cell outer membrane. Its function is as follows. Plays a critical role in the incorporation of lipoproteins in the outer membrane after they are released by the LolA protein. The protein is Outer-membrane lipoprotein LolB of Xanthomonas euvesicatoria pv. vesicatoria (strain 85-10) (Xanthomonas campestris pv. vesicatoria).